Consider the following 241-residue polypeptide: MAYVFEQMEATDYEKVNTKLKNRDSLDILRWANQTYGEKLVYACSFGAEAMVLLDLLSKIQKEAHILFLDTDFHFAETYELIERVKERYPTFRINMAKPALSPEEQAERYGDELWLKNPDQCCQIRKLDVLARELEPYDAWLSGLRREQSPTRANTEFVNQDKRFKKVKVCPLIHWTEEEIWMYIKLHQLPYNELHDQHYPSIGCTYCTKAVMPGEDARSGRWAGTGKTECGLHAPTKGDS.

Residues C122, C123, C205, and C208 each contribute to the [4Fe-4S] cluster site. The Nucleophile; cysteine thiosulfonate intermediate role is filled by C231.

It belongs to the PAPS reductase family. CysH subfamily. The cofactor is [4Fe-4S] cluster.

It is found in the cytoplasm. The enzyme catalyses [thioredoxin]-disulfide + sulfite + AMP + 2 H(+) = adenosine 5'-phosphosulfate + [thioredoxin]-dithiol. It functions in the pathway sulfur metabolism; hydrogen sulfide biosynthesis; sulfite from sulfate. Functionally, catalyzes the formation of sulfite from adenosine 5'-phosphosulfate (APS) using thioredoxin as an electron donor. The chain is Adenosine 5'-phosphosulfate reductase from Shouchella clausii (strain KSM-K16) (Alkalihalobacillus clausii).